The chain runs to 104 residues: L-rhamnose mutarotase (104 aa).

Tyr18 is a binding site for substrate. The active-site Proton donor is the His22. Residues Tyr41 and 76 to 77 contribute to the substrate site; that span reads WW.

It belongs to the rhamnose mutarotase family. As to quaternary structure, homodimer.

The protein resides in the cytoplasm. The catalysed reaction is alpha-L-rhamnose = beta-L-rhamnose. It functions in the pathway carbohydrate metabolism; L-rhamnose metabolism. Functionally, involved in the anomeric conversion of L-rhamnose. The sequence is that of L-rhamnose mutarotase from Salmonella arizonae (strain ATCC BAA-731 / CDC346-86 / RSK2980).